Here is a 390-residue protein sequence, read N- to C-terminus: Sister chromatid cohesion protein DCC1 (390 aa).

This sequence belongs to the DCC1 family. In terms of assembly, component of the ctf18-RFC complex which consists of ctf18, ctf8, dscc1 and the RFC complex.

The protein resides in the nucleus. Its function is as follows. Loads pcna onto primed templates regulating velocity, spacing and restart activity of replication forks. May couple DNA replication to sister chromatid cohesion. This is Sister chromatid cohesion protein DCC1 (dscc1) from Xenopus laevis (African clawed frog).